The primary structure comprises 359 residues: 5-amino-6-(D-ribitylamino)uracil--L-tyrosine 4-hydroxyphenyl transferase (359 aa).

Residues Val-45–Lys-282 enclose the Radical SAM core domain. 3 residues coordinate [4Fe-4S] cluster: Cys-59, Cys-63, and Cys-66.

This sequence belongs to the radical SAM superfamily. CofH family. In terms of assembly, consists of two subunits, CofG and CofH. [4Fe-4S] cluster serves as cofactor.

The catalysed reaction is 5-amino-6-(D-ribitylamino)uracil + L-tyrosine + S-adenosyl-L-methionine = 5-amino-5-(4-hydroxybenzyl)-6-(D-ribitylimino)-5,6-dihydrouracil + 2-iminoacetate + 5'-deoxyadenosine + L-methionine + H(+). Its pathway is cofactor biosynthesis; coenzyme F0 biosynthesis. Its function is as follows. Catalyzes the radical-mediated synthesis of 5-amino-5-(4-hydroxybenzyl)-6-(D-ribitylimino)-5,6-dihydrouracil from 5-amino-6-(D-ribitylamino)uracil and L-tyrosine. The chain is 5-amino-6-(D-ribitylamino)uracil--L-tyrosine 4-hydroxyphenyl transferase from Methanococcus maripaludis (strain C7 / ATCC BAA-1331).